The primary structure comprises 1021 residues: DNA-directed RNA polymerase 2B, chloroplastic/mitochondrial (1021 aa).

A disordered region spans residues 315 to 337 (KKQKAEKDKQKEDGEHVTQEQEK). Residues aspartate 722, lysine 797, and aspartate 954 contribute to the active site.

This sequence belongs to the phage and mitochondrial RNA polymerase family.

The protein localises to the plastid. It is found in the chloroplast. Its subcellular location is the mitochondrion. The enzyme catalyses RNA(n) + a ribonucleoside 5'-triphosphate = RNA(n+1) + diphosphate. Its function is as follows. DNA-dependent RNA polymerase catalyzes the transcription of DNA into RNA using the four ribonucleoside triphosphates as substrates. This Nicotiana tabacum (Common tobacco) protein is DNA-directed RNA polymerase 2B, chloroplastic/mitochondrial (RPOT2-TOM).